A 901-amino-acid polypeptide reads, in one-letter code: Protein translocase subunit SecA (901 aa).

ATP contacts are provided by residues Gln-87, 105 to 109, and Asp-512; that span reads GEGKT. The segment at 859–901 is disordered; the sequence is HQDDDSAAAAALAAQTGERKVGRNDPCPCGSGKKYKQCHGRLQ. The Zn(2+) site is built by Cys-885, Cys-887, Cys-896, and His-897. The segment covering 891-901 has biased composition (basic residues); the sequence is KKYKQCHGRLQ.

It belongs to the SecA family. Monomer and homodimer. Part of the essential Sec protein translocation apparatus which comprises SecA, SecYEG and auxiliary proteins SecDF-YajC and YidC. Requires Zn(2+) as cofactor.

It localises to the cell inner membrane. The protein localises to the cytoplasm. It carries out the reaction ATP + H2O + cellular proteinSide 1 = ADP + phosphate + cellular proteinSide 2.. Part of the Sec protein translocase complex. Interacts with the SecYEG preprotein conducting channel. Has a central role in coupling the hydrolysis of ATP to the transfer of proteins into and across the cell membrane, serving both as a receptor for the preprotein-SecB complex and as an ATP-driven molecular motor driving the stepwise translocation of polypeptide chains across the membrane. The sequence is that of Protein translocase subunit SecA from Escherichia coli (strain 55989 / EAEC).